The sequence spans 74 residues: Conotoxin VxVIA (74 aa).

An N-terminal signal peptide occupies residues 1-22 (MKLTCVLIIAVLFLTAYQLATA). Positions 23 to 47 (ASHAKGKQKHRALRPADKHFRFTKR) are excised as a propeptide. 3 disulfides stabilise this stretch: Cys48–Cys62, Cys55–Cys66, and Cys61–Cys73.

In terms of tissue distribution, expressed by the venom duct.

The protein resides in the secreted. Its function is as follows. When injected intracranially in mice, induces a series of symptoms such as quivering, climbing, scratching, barrel rolling and paralysis of limbs. Unexpectedly, no effect is observed on ionic currents when tested on locust DUM neuron. This chain is Conotoxin VxVIA, found in Conus vexillum (Flag cone).